The sequence spans 377 residues: MLYWLLYQKLFPYFRPFRIFRYLTFRTAFASLTALLIALLIGPYVIEKLREFQIGQYIREEGPQAHQKKAGTPTMGGVLICIAILLPTLLWSDLSDPFVWIVMLSTLAFGAIGFADDYIKVVHRRNLGLTARAKMTYQILASAAIGVALVVLQGQGSYSTDLMVPFAKSLRPRFSIPALLHVPHLAYFAFIPFVIFVIIVIVGSSNAVNLTDGLDGLAIGCTIIAAGALTVLTYVSGHAVFADYLELQRMPMVGEVTIFCGAMVGASIGFLWYNAHPAQIFMGDVGSLALGGAIATVAVVIKQELLLPFIGGIFVLEALSVILQVGSYKLRKKRIFKMAPLHHHFELIGWSESKVIVRFWIAALVFALFALTTLKLR.

Helical transmembrane passes span 27–47, 71–91, 94–114, 139–159, 182–202, 216–236, 252–272, 280–300, 305–325, and 354–374; these read TAFA…YVIE, GTPT…TLLW, LSDP…AIGF, ILAS…GSYS, VPHL…IVIV, GLAI…TYVS, MVGE…GFLW, IFMG…VAVV, LLLP…ILQV, and KVIV…LTTL.

It belongs to the glycosyltransferase 4 family. MraY subfamily. It depends on Mg(2+) as a cofactor.

The protein localises to the cell inner membrane. The catalysed reaction is UDP-N-acetyl-alpha-D-muramoyl-L-alanyl-gamma-D-glutamyl-meso-2,6-diaminopimeloyl-D-alanyl-D-alanine + di-trans,octa-cis-undecaprenyl phosphate = di-trans,octa-cis-undecaprenyl diphospho-N-acetyl-alpha-D-muramoyl-L-alanyl-D-glutamyl-meso-2,6-diaminopimeloyl-D-alanyl-D-alanine + UMP. The protein operates within cell wall biogenesis; peptidoglycan biosynthesis. Functionally, catalyzes the initial step of the lipid cycle reactions in the biosynthesis of the cell wall peptidoglycan: transfers peptidoglycan precursor phospho-MurNAc-pentapeptide from UDP-MurNAc-pentapeptide onto the lipid carrier undecaprenyl phosphate, yielding undecaprenyl-pyrophosphoryl-MurNAc-pentapeptide, known as lipid I. This is Phospho-N-acetylmuramoyl-pentapeptide-transferase from Acidobacterium capsulatum (strain ATCC 51196 / DSM 11244 / BCRC 80197 / JCM 7670 / NBRC 15755 / NCIMB 13165 / 161).